Consider the following 252-residue polypeptide: Chitooligosaccharide deacetylase (252 aa).

Mg(2+) contacts are provided by histidine 61 and histidine 125.

The protein belongs to the YdjC deacetylase family. ChbG subfamily. In terms of assembly, homodimer. The cofactor is Mg(2+).

The protein localises to the cytoplasm. It catalyses the reaction N,N'-diacetylchitobiose + H2O = N-acetyl-beta-D-glucosaminyl-(1-&gt;4)-D-glucosamine + acetate. The enzyme catalyses diacetylchitobiose-6'-phosphate + H2O = N'-monoacetylchitobiose-6'-phosphate + acetate. Its pathway is glycan degradation; chitin degradation. Involved in the degradation of chitin. ChbG is essential for growth on the acetylated chitooligosaccharides chitobiose and chitotriose but is dispensable for growth on cellobiose and chitosan dimer, the deacetylated form of chitobiose. Deacetylation of chitobiose-6-P and chitotriose-6-P is necessary for both the activation of the chb promoter by the regulatory protein ChbR and the hydrolysis of phosphorylated beta-glucosides by the phospho-beta-glucosidase ChbF. Catalyzes the removal of only one acetyl group from chitobiose-6-P to yield monoacetylchitobiose-6-P, the inducer of ChbR and the substrate of ChbF. In Salmonella schwarzengrund (strain CVM19633), this protein is Chitooligosaccharide deacetylase.